The following is a 551-amino-acid chain: L-lactate permease (551 aa).

12 helical membrane passes run 13-33 (NIWL…FALI), 37-57 (LKGY…ALLF), 69-89 (VVYG…AAVF), 131-151 (GAAG…GLGF), 159-179 (LCLI…PILV), 194-214 (MVGR…MAIM), 244-264 (FIGP…CLTL), 306-326 (FLFL…ALFA), 366-386 (FDWF…SIVW), 405-425 (LALP…SNYS), 438-458 (TGSA…FLTG), and 530-550 (IFTC…TWMI).

This sequence belongs to the lactate permease family.

The protein resides in the cell inner membrane. It catalyses the reaction (S)-lactate(in) + H(+)(in) = (S)-lactate(out) + H(+)(out). It carries out the reaction (R)-lactate(in) + H(+)(in) = (R)-lactate(out) + H(+)(out). The enzyme catalyses glycolate(in) + H(+)(in) = glycolate(out) + H(+)(out). Its function is as follows. Uptake of L-lactate across the membrane. Can also transport D-lactate and glycolate. Seems to be driven by a proton motive force. The polypeptide is L-lactate permease (lldP) (Salmonella typhimurium (strain LT2 / SGSC1412 / ATCC 700720)).